The primary structure comprises 159 residues: ATP synthase subunit b (159 aa).

The helical transmembrane segment at 2–22 (NISIPQIIAAILNFIILLLIV) threads the bilayer.

It belongs to the ATPase B chain family. F-type ATPases have 2 components, F(1) - the catalytic core - and F(0) - the membrane proton channel. F(1) has five subunits: alpha(3), beta(3), gamma(1), delta(1), epsilon(1). F(0) has three main subunits: a(1), b(2) and c(10-14). The alpha and beta chains form an alternating ring which encloses part of the gamma chain. F(1) is attached to F(0) by a central stalk formed by the gamma and epsilon chains, while a peripheral stalk is formed by the delta and b chains.

It is found in the cell membrane. In terms of biological role, f(1)F(0) ATP synthase produces ATP from ADP in the presence of a proton or sodium gradient. F-type ATPases consist of two structural domains, F(1) containing the extramembraneous catalytic core and F(0) containing the membrane proton channel, linked together by a central stalk and a peripheral stalk. During catalysis, ATP synthesis in the catalytic domain of F(1) is coupled via a rotary mechanism of the central stalk subunits to proton translocation. Its function is as follows. Component of the F(0) channel, it forms part of the peripheral stalk, linking F(1) to F(0). This is ATP synthase subunit b from Clostridium botulinum (strain Loch Maree / Type A3).